Consider the following 421-residue polypeptide: UDP-N-acetylglucosamine 1-carboxyvinyltransferase 1 (421 aa).

22–23 (KN) contributes to the phosphoenolpyruvate binding site. Arg95 is a UDP-N-acetyl-alpha-D-glucosamine binding site. Cys119 (proton donor) is an active-site residue. A 2-(S-cysteinyl)pyruvic acid O-phosphothioketal modification is found at Cys119. UDP-N-acetyl-alpha-D-glucosamine is bound by residues 124 to 128 (RPIEQ), Asp308, and Val330.

The protein belongs to the EPSP synthase family. MurA subfamily.

It is found in the cytoplasm. It catalyses the reaction phosphoenolpyruvate + UDP-N-acetyl-alpha-D-glucosamine = UDP-N-acetyl-3-O-(1-carboxyvinyl)-alpha-D-glucosamine + phosphate. It participates in cell wall biogenesis; peptidoglycan biosynthesis. Cell wall formation. Adds enolpyruvyl to UDP-N-acetylglucosamine. This chain is UDP-N-acetylglucosamine 1-carboxyvinyltransferase 1, found in Staphylococcus aureus (strain MW2).